Here is a 347-residue protein sequence, read N- to C-terminus: NADH-ubiquinone oxidoreductase chain 2 (347 aa).

11 helical membrane passes run 3-23 (PPILIIIMSTVMSGTMIVLTS), 25-45 (HWLLIWIGFEMNMLAIIPILM), 60-80 (FLTQATASMLLMMGIIINLMF), 96-116 (GLVTIALTMKLGMAPFHFWVP), 122-142 (ISLSSGMILLTWQKIAPLSIL), 153-173 (LLITMAIASVLIGGWGGLNQT), 178-198 (ILAYSSIAHMGWMAVILTYNP), 200-220 (LMILNLTIYITMTLSTFMLFM), 237-257 (LPLMTSLILVLMMSLGGLPPL), 274-294 (DMIILPTFMAITALLNLYFYM), and 323-343 (IILLPPLIIISTMLLPMTPMM).

It belongs to the complex I subunit 2 family. In terms of assembly, core subunit of respiratory chain NADH dehydrogenase (Complex I) which is composed of 45 different subunits. Interacts with TMEM242.

The protein resides in the mitochondrion inner membrane. It catalyses the reaction a ubiquinone + NADH + 5 H(+)(in) = a ubiquinol + NAD(+) + 4 H(+)(out). In terms of biological role, core subunit of the mitochondrial membrane respiratory chain NADH dehydrogenase (Complex I) which catalyzes electron transfer from NADH through the respiratory chain, using ubiquinone as an electron acceptor. Essential for the catalytic activity and assembly of complex I. In Halichoerus grypus (Gray seal), this protein is NADH-ubiquinone oxidoreductase chain 2.